The chain runs to 469 residues: 3-isopropylmalate dehydratase large subunit (469 aa).

Residues C347, C408, and C411 each contribute to the [4Fe-4S] cluster site.

This sequence belongs to the aconitase/IPM isomerase family. LeuC type 1 subfamily. As to quaternary structure, heterodimer of LeuC and LeuD. It depends on [4Fe-4S] cluster as a cofactor.

It carries out the reaction (2R,3S)-3-isopropylmalate = (2S)-2-isopropylmalate. Its pathway is amino-acid biosynthesis; L-leucine biosynthesis; L-leucine from 3-methyl-2-oxobutanoate: step 2/4. Its function is as follows. Catalyzes the isomerization between 2-isopropylmalate and 3-isopropylmalate, via the formation of 2-isopropylmaleate. The sequence is that of 3-isopropylmalate dehydratase large subunit from Actinobacillus pleuropneumoniae serotype 7 (strain AP76).